A 235-amino-acid polypeptide reads, in one-letter code: Small ribosomal subunit protein uS2 (235 aa).

It belongs to the universal ribosomal protein uS2 family.

The polypeptide is Small ribosomal subunit protein uS2 (Anoxybacillus flavithermus (strain DSM 21510 / WK1)).